A 328-amino-acid chain; its full sequence is uncharacterized protein (328 aa).

The disordered stretch occupies residues 296 to 328; it reads APEGDLEDEIIEVDPEQPRDDPYRRLRTPPPGG. Acidic residues predominate over residues 299 to 310; that stretch reads GDLEDEIIEVDP.

Possibly necessary for replication. This is an uncharacterized protein from Halobacterium sp. (strain GN101).